Reading from the N-terminus, the 232-residue chain is uncharacterized protein (232 aa).

Disordered stretches follow at residues 123-147 (VAGG…RKYP) and 169-200 (AAAD…PSLR).

This sequence belongs to the mycobacterial PPE family.

This is an uncharacterized protein from Mycobacterium tuberculosis (strain ATCC 25618 / H37Rv).